A 210-amino-acid polypeptide reads, in one-letter code: Thymidylate kinase (210 aa).

11-18 (GLEGAGKS) serves as a coordination point for ATP.

The protein belongs to the thymidylate kinase family.

It catalyses the reaction dTMP + ATP = dTDP + ADP. Its function is as follows. Phosphorylation of dTMP to form dTDP in both de novo and salvage pathways of dTTP synthesis. The polypeptide is Thymidylate kinase (Histophilus somni (strain 129Pt) (Haemophilus somnus)).